An 83-amino-acid polypeptide reads, in one-letter code: Small ribosomal subunit protein bS16c (83 aa).

The protein belongs to the bacterial ribosomal protein bS16 family.

Its subcellular location is the plastid. It localises to the chloroplast. The protein is Small ribosomal subunit protein bS16c of Chaetosphaeridium globosum (Charophycean green alga).